The primary structure comprises 150 residues: Transcriptional repressor NrdR (150 aa).

A zinc finger spans residues 3–34 (CPFCHHPQSRVIDSRTVENGFVTRRRRQCTKC). Residues 46–136 (LLVEKRNGVT…VYKSFSSMED (91 aa)) form the ATP-cone domain.

It belongs to the NrdR family. Requires Zn(2+) as cofactor.

In terms of biological role, negatively regulates transcription of bacterial ribonucleotide reductase nrd genes and operons by binding to NrdR-boxes. The chain is Transcriptional repressor NrdR from Corynebacterium kroppenstedtii (strain DSM 44385 / JCM 11950 / CIP 105744 / CCUG 35717).